The following is a 1050-amino-acid chain: Diacylglycerol kinase iota (1050 aa).

3 disordered regions span residues 53–74, 92–111, and 328–356; these read PSSS…GSGA, AAAA…EKEE, and SLKA…ETKG. Residues 92 to 105 are compositionally biased toward low complexity; it reads AAAAAALEEPAAAG. The span at 332-347 shows a compositional bias: basic residues; the sequence is SNRKKKRTSFKRKASK. A DAGKc domain is found at 367–502; it reads PLMKPLLVFV…DRWNLHVERN (136 aa). 2 ANK repeats span residues 943–972 and 979–1008; these read GHCS…AELL and TGET…SLRQ. The PDZ-binding signature appears at 1048–1050; sequence TAV.

Belongs to the eukaryotic diacylglycerol kinase family. As to quaternary structure, interacts (via PDZ-binding motif) with DLG4; controls the localization of DGKI to the synapse. Interacts (via PDZ-binding motif) with DLG1. Interacts (via PDZ-binding motif) with DLG2. Interacts (via PDZ-binding motif) with DLG3. May interact with RASGRP3; involved in the regulation of RASGRP3 activity. In terms of tissue distribution, in brain, expressed in the hippocampus and cerebellum with stronger expression in the Purkinje cell layer (at protein level). Expressed in kidney.

It localises to the cell projection. The protein resides in the axon. It is found in the dendrite. Its subcellular location is the presynapse. The protein localises to the postsynapse. It localises to the postsynaptic density. The protein resides in the synaptic cell membrane. It is found in the cytoplasmic vesicle. Its subcellular location is the secretory vesicle. The protein localises to the synaptic vesicle membrane. It localises to the cytoplasm. The protein resides in the cytosol. It is found in the nucleus. It carries out the reaction a 1,2-diacyl-sn-glycerol + ATP = a 1,2-diacyl-sn-glycero-3-phosphate + ADP + H(+). The catalysed reaction is 1,2-di-(9Z-octadecenoyl)-sn-glycerol + ATP = 1,2-di-(9Z-octadecenoyl)-sn-glycero-3-phosphate + ADP + H(+). The enzyme catalyses 1-octadecanoyl-2-(5Z,8Z,11Z,14Z-eicosatetraenoyl)-sn-glycerol + ATP = 1-octadecanoyl-2-(5Z,8Z,11Z,14Z-eicosatetraenoyl)-sn-glycero-3-phosphate + ADP + H(+). It catalyses the reaction 1-octadecanoyl-2-(9Z,12Z)-octadecadienoyl-sn-glycerol + ATP = 1-octadecanoyl-2-(9Z,12Z-octadecadienoyl)-sn-glycero-3-phosphate + ADP + H(+). It participates in lipid metabolism; glycerolipid metabolism. Its function is as follows. Diacylglycerol kinase that converts diacylglycerol/DAG into phosphatidic acid/phosphatidate/PA and regulates the respective levels of these two bioactive lipids. Thereby, acts as a central switch between the signaling pathways activated by these second messengers with different cellular targets and opposite effects in numerous biological processes. Has probably no preference for any of the diacylglycerols in terms of the acyl chain composition, especially for the acyl chain at the sn-2 position. By controlling the diacylglycerol/DAG-mediated activation of RASGRP3, negatively regulates the Rap1 signaling pathway. May play a role in presynaptic diacylglycerol/DAG signaling and control neurotransmitter release during metabotropic glutamate receptor-dependent long-term depression. This Mus musculus (Mouse) protein is Diacylglycerol kinase iota.